The sequence spans 224 residues: Synaptonemal complex protein 3 (224 aa).

Coiled coils occupy residues Arg63–Arg97 and His137–Thr171.

As to quaternary structure, interacts with gras-1. Interacts with brc-1 and brd-1.

It is found in the chromosome. Functionally, plays a role in early meiotic events; during prophase I contributes to synaptonemal complex (SC) assembly, synapsis and chiasmata formation and stabilization of homologous chromosomes pairing. Required for restricting SC assembly to bridge paired chromosome axes. Required for the timely progression of meiotic crossover recombination. Required for the synapsis checkpoint. The polypeptide is Synaptonemal complex protein 3 (Caenorhabditis elegans).